Here is a 294-residue protein sequence, read N- to C-terminus: Lipoyl synthase (294 aa).

Positions 41, 46, 52, 67, 71, 74, and 281 each coordinate [4Fe-4S] cluster. The region spanning 53–270 (FNNGTATFMI…KLESLAMGFT (218 aa)) is the Radical SAM core domain.

The protein belongs to the radical SAM superfamily. Lipoyl synthase family. It depends on [4Fe-4S] cluster as a cofactor.

It localises to the cytoplasm. It catalyses the reaction [[Fe-S] cluster scaffold protein carrying a second [4Fe-4S](2+) cluster] + N(6)-octanoyl-L-lysyl-[protein] + 2 oxidized [2Fe-2S]-[ferredoxin] + 2 S-adenosyl-L-methionine + 4 H(+) = [[Fe-S] cluster scaffold protein] + N(6)-[(R)-dihydrolipoyl]-L-lysyl-[protein] + 4 Fe(3+) + 2 hydrogen sulfide + 2 5'-deoxyadenosine + 2 L-methionine + 2 reduced [2Fe-2S]-[ferredoxin]. It participates in protein modification; protein lipoylation via endogenous pathway; protein N(6)-(lipoyl)lysine from octanoyl-[acyl-carrier-protein]: step 2/2. Functionally, catalyzes the radical-mediated insertion of two sulfur atoms into the C-6 and C-8 positions of the octanoyl moiety bound to the lipoyl domains of lipoate-dependent enzymes, thereby converting the octanoylated domains into lipoylated derivatives. The polypeptide is Lipoyl synthase (Baumannia cicadellinicola subsp. Homalodisca coagulata).